A 798-amino-acid polypeptide reads, in one-letter code: uncharacterized protein (798 aa).

Low complexity predominate over residues 1 to 13; the sequence is MSSSQSPSTPSAS. Residues 1–58 constitute a chloroplast transit peptide; that stretch reads MSSSQSPSTPSASLVDSSDSKHPDDLPQIYKRRSVWTSSEDAVSSSNSPEQTTPFTVR. Disordered stretches follow at residues 1–99, 135–158, and 417–473; these read MSSS…WQDA, AEKKKRKKKKKAVMPNPPGSSMCT, and TGLI…AEPS. Residues 35 to 55 are compositionally biased toward polar residues; that stretch reads VWTSSEDAVSSSNSPEQTTPF. Over residues 57 to 79 the composition is skewed to basic and acidic residues; that stretch reads VREDTNADIARELDLPDDPEPHL. The span at 137–146 shows a compositional bias: basic residues; sequence KKKRKKKKKA. A compositionally biased stretch (low complexity) spans 462–473; that stretch reads AAPAEAQGAEPS. Positions 578–658 form a coiled coil; the sequence is RSNMEVAGKL…MLSEARGLRD (81 aa). Residues 749–798 are disordered; the sequence is DDLKAPAPEPAPLSPGGHRSVESLADEAGITDQAGSLLPAKDNRPSEDLD. Ser-762 carries the post-translational modification Phosphoserine. Positions 789–798 are enriched in basic and acidic residues; that stretch reads KDNRPSEDLD.

It localises to the plastid. It is found in the chloroplast. This is an uncharacterized protein from Arabidopsis thaliana (Mouse-ear cress).